Consider the following 413-residue polypeptide: Serine hydroxymethyltransferase (413 aa).

(6S)-5,6,7,8-tetrahydrofolate-binding positions include Leu-119 and 123-125 (GHL). Lys-228 is subject to N6-(pyridoxal phosphate)lysine. Residue Glu-243 coordinates (6S)-5,6,7,8-tetrahydrofolate.

It belongs to the SHMT family. Homodimer. The cofactor is pyridoxal 5'-phosphate.

It localises to the cytoplasm. The enzyme catalyses (6R)-5,10-methylene-5,6,7,8-tetrahydrofolate + glycine + H2O = (6S)-5,6,7,8-tetrahydrofolate + L-serine. The protein operates within one-carbon metabolism; tetrahydrofolate interconversion. Its pathway is amino-acid biosynthesis; glycine biosynthesis; glycine from L-serine: step 1/1. Functionally, catalyzes the reversible interconversion of serine and glycine with tetrahydrofolate (THF) serving as the one-carbon carrier. This reaction serves as the major source of one-carbon groups required for the biosynthesis of purines, thymidylate, methionine, and other important biomolecules. Also exhibits THF-independent aldolase activity toward beta-hydroxyamino acids, producing glycine and aldehydes, via a retro-aldol mechanism. The polypeptide is Serine hydroxymethyltransferase (Thermoanaerobacter pseudethanolicus (strain ATCC 33223 / 39E) (Clostridium thermohydrosulfuricum)).